Reading from the N-terminus, the 876-residue chain is Alanine--tRNA ligase (876 aa).

A catalytic region spans residues 2-461 (SKSTAEIRQA…VDSASEFKGY (460 aa)). Residue lysine 74 is modified to N6-acetyllysine. An editing region spans residues 553–705 (DEARRARIRL…EAVTGEGAIA (153 aa)). Zn(2+) is bound by residues histidine 564, histidine 568, cysteine 666, and histidine 670. The interval 699 to 808 (TGEGAIATVH…STIIVLATVV (110 aa)) is important for oligomerization. The interval 766 to 875 (IDVNGVKLLV…SVKGWVSAKL (110 aa)) is C-Ala domain.

The protein belongs to the class-II aminoacyl-tRNA synthetase family. As to quaternary structure, homotetramer. Requires Zn(2+) as cofactor.

Its subcellular location is the cytoplasm. The catalysed reaction is tRNA(Ala) + L-alanine + ATP = L-alanyl-tRNA(Ala) + AMP + diphosphate. The enzyme catalyses (S)-lactate + ATP + H(+) = (S)-lactoyl-AMP + diphosphate. It carries out the reaction (S)-lactoyl-AMP + L-lysyl-[protein] = N(6)-[(S)-lactoyl]-L-lysyl-[protein] + AMP + 2 H(+). Its activity is regulated as follows. Acetylation at Lys-74 decreases the alanylation activity for tRNA(Ala); a protein that is fully acetylated is inactive in vitro. In terms of biological role, catalyzes the attachment of L-alanine to tRNA(Ala) in a two-step reaction: L-alanine is first activated by ATP to form Ala-AMP and then transferred to the acceptor end of tRNA(Ala). AlaRS also incorrectly activates the sterically smaller amino acid glycine as well as the sterically larger amino acid L-serine; generates 2-fold more mischarged Gly than Ser. These mischarged amino acids occur because the of inherent physicochemical limitations on discrimination between closely related amino acids (Ala, Gly and Ser) in the charging step. In presence of high levels of lactate, also acts as a protein lactyltransferase that mediates lactylation of lysine residues in target proteins. Its function is as follows. Edits mischarged Ser-tRNA(Ala) and Gly-tRNA(Ala) but not incorrectly charged Ser-tRNA(Thr). Dtd edits Gly-tRNA(Ala) 4-fold better than does AlaRS. Attaches Ala to transfer-messenger RNA (tmRNA, also known as 10Sa RNA, the product of the ssrA gene). tmRNA plays a major role in rescue of stalled ribosomes via trans-translation. In Escherichia coli (strain K12), this protein is Alanine--tRNA ligase (alaS).